The chain runs to 303 residues: Coenzyme PQQ synthesis protein B (303 aa).

This sequence belongs to the PqqB family.

It functions in the pathway cofactor biosynthesis; pyrroloquinoline quinone biosynthesis. Its function is as follows. May be involved in the transport of PQQ or its precursor to the periplasm. The protein is Coenzyme PQQ synthesis protein B of Acinetobacter baumannii (strain AB0057).